Here is a 293-residue protein sequence, read N- to C-terminus: GTPase Era (293 aa).

Positions 2–168 (KILFSTIIGR…INEIKKYSYE (167 aa)) constitute an Era-type G domain. A G1 region spans residues 10–17 (GRPNVGKS). 10 to 17 (GRPNVGKS) lines the GTP pocket. The G2 stretch occupies residues 36-40 (QATRD). Residues 57–60 (DTPG) are G3. GTP contacts are provided by residues 57-61 (DTPGI) and 118-121 (TKID). Residues 118-121 (TKID) form a G4 region. Residues 147-149 (ISS) form a G5 region. Positions 199 to 279 (LEQELPHSIL…KLFLKIKVKK (81 aa)) constitute a KH type-2 domain.

This sequence belongs to the TRAFAC class TrmE-Era-EngA-EngB-Septin-like GTPase superfamily. Era GTPase family. As to quaternary structure, monomer.

It localises to the cytoplasm. The protein resides in the cell membrane. In terms of biological role, an essential GTPase that binds both GDP and GTP, with rapid nucleotide exchange. Plays a role in 16S rRNA processing and 30S ribosomal subunit biogenesis and possibly also in cell cycle regulation and energy metabolism. This chain is GTPase Era, found in Mycoplasmopsis pulmonis (strain UAB CTIP) (Mycoplasma pulmonis).